We begin with the raw amino-acid sequence, 333 residues long: Nuclear egress protein 1 (333 aa).

The disordered stretch occupies residues 45-64; it reads SRRYKSVSRSGPSMRVRSRT. A CCCH-type zinc finger spans residues 128–251; that stretch reads CLSLSGMGYH…YVIFPGKSVH (124 aa).

This sequence belongs to the herpesviridae NEC1 protein family. In terms of assembly, forms a heterohexameric complex with NEC2. Interacts with capsid vertex specific component 2/CVC2; this interaction directs the capsid to the host inner nuclear membrane to initiate budding. Post-translationally, phosphorylated at serine residues in the N-terminus. This phosphorylation regulates the localization within the inner nuclear membrane.

The protein localises to the host nucleus inner membrane. In terms of biological role, plays an essential role in virion nuclear egress, the first step of virion release from infected cell. Within the host nucleus, NEC1 interacts with the newly formed capsid through the vertexes and directs it to the inner nuclear membrane by associating with NEC2. Induces the budding of the capsid at the inner nuclear membrane as well as its envelopment into the perinuclear space. There, the NEC1/NEC2 complex promotes the fusion of the enveloped capsid with the outer nuclear membrane and the subsequent release of the viral capsid into the cytoplasm where it will reach the secondary budding sites in the host Golgi or trans-Golgi network. The chain is Nuclear egress protein 1 from Varicella-zoster virus (strain Dumas) (HHV-3).